A 496-amino-acid polypeptide reads, in one-letter code: Pyrrole-2-carboxylic acid decarboxylase (496 aa).

Tryptophan 166 contacts K(+). The prenylated FMN site is built by valine 168, arginine 170, glutamine 187, and histidine 188. Histidine 188 is a binding site for Mn(2+). Alanine 218, alanine 219, methionine 221, and glutamate 229 together coordinate K(+). Glutamate 229 is a prenylated FMN binding site. Residue glutamate 229 participates in Mn(2+) binding. Catalysis depends on glutamate 278, which acts as the Proton donor. Histidine 386 provides a ligand contact to prenylated FMN.

It belongs to the UbiD family. UbiD-like/FDC subfamily. Homodimer. It depends on prenylated FMN as a cofactor. Mn(2+) is required as a cofactor. Requires K(+) as cofactor.

It catalyses the reaction pyrrole-2-carboxylate + H(+) = 1H-pyrrole + CO2. The catalysed reaction is pyrrole-2-carboxylate + H2O = 1H-pyrrole + hydrogencarbonate. Imidazole acts as a reversible inhibitor via the formation of an imidazole-prenyl-FMN adduct. Activity is light sensitive. In terms of biological role, catalyzes the prenyl-FMN-dependent decarboxylation of pyrrole-2-carboxylate (P2C). Can also catalyze the carboxylation of pyrrole in the presence of elevated concentrations of CO(2) or bicarbonate. Can accept a modest range of heteroaromatic compounds such as 3-methylpyrrole-2-carboxylate, indole-3-carboxylate and furan-2-carboxylate, and shows very low activity with thiophene-2-carboxylate. Attenuates the virulence of P.aeruginosa in a Drosophila model when overexpressed. This Pseudomonas aeruginosa (strain ATCC 15692 / DSM 22644 / CIP 104116 / JCM 14847 / LMG 12228 / 1C / PRS 101 / PAO1) protein is Pyrrole-2-carboxylic acid decarboxylase.